The chain runs to 564 residues: Centrosomal protein kizuna (564 aa).

The disordered stretch occupies residues 1-21; the sequence is MSEAGRAAAGPCPEVSPSRSQ. Residues 28–50 adopt a coiled-coil conformation; it reads RCLRDSETRRLELERKLMEYKSS. Disordered regions lie at residues 178-201, 304-345, 442-465, 487-519, and 531-564; these read QPAA…PTQA, TGPQ…EDEP, ECGD…PNDS, IGNN…RPEF, and AFWG…DFYD. Positions 313–324 are enriched in low complexity; it reads QQAASQDSSSSS. Residues 447–463 show a composition bias toward polar residues; the sequence is SSVQSNESSYSLPSIPN. Over residues 493-519 the composition is skewed to basic and acidic residues; it reads EAKESQEMCSERSSSSERSGDLSRPEF.

It belongs to the kizuna family.

The protein localises to the cytoplasm. Its subcellular location is the cytoskeleton. It is found in the microtubule organizing center. The protein resides in the centrosome. It localises to the cilium basal body. In terms of biological role, centrosomal protein required for establishing a robust mitotic centrosome architecture that can endure the forces that converge on the centrosomes during spindle formation. Required for stabilizing the expanded pericentriolar material around the centriole. The sequence is that of Centrosomal protein kizuna (KIZ) from Gallus gallus (Chicken).